Consider the following 376-residue polypeptide: c-di-GMP synthase (376 aa).

The protein belongs to the CD-NTase family. G05 subfamily.

The catalysed reaction is 2 GTP = 3',3'-c-di-GMP + 2 diphosphate. Functionally, cyclic nucleotide synthase (second messenger synthase) of a CBASS antivirus system. CBASS (cyclic oligonucleotide-based antiphage signaling system) provides immunity against bacteriophage. The CD-NTase protein synthesizes cyclic nucleotides in response to infection; these serve as specific second messenger signals. The signals activate a diverse range of effectors, leading to bacterial cell death and thus abortive phage infection. A type I-D CBASS(GG) system. Cyclic dinucleotide synthase that catalyzes the synthesis of c-di-GMP, has no activity with other NTP substrates. This is c-di-GMP synthase from Roseivirga ehrenbergii (strain DSM 102268 / JCM 13514 / KCTC 12282 / NCIMB 14502 / KMM 6017).